A 387-amino-acid chain; its full sequence is Putative ankyrin repeat protein RBE_0984 (387 aa).

ANK repeat units follow at residues 50 to 79 (YGNT…DKDI), 88 to 119 (HRET…AINV), 123 to 154 (RKHT…VINV), 159 to 188 (HKDS…KENI), and 210 to 239 (VCKM…LKGE). 2 coiled-coil regions span residues 251–278 (FEDI…KKCE) and 311–352 (SISA…ALEK).

The sequence is that of Putative ankyrin repeat protein RBE_0984 from Rickettsia bellii (strain RML369-C).